A 152-amino-acid chain; its full sequence is Ribosome maturation factor RimP (152 aa).

Belongs to the RimP family.

Its subcellular location is the cytoplasm. Its function is as follows. Required for maturation of 30S ribosomal subunits. The chain is Ribosome maturation factor RimP from Escherichia coli (strain K12 / MC4100 / BW2952).